A 380-amino-acid polypeptide reads, in one-letter code: Cytochrome b (380 aa).

The next 4 helical transmembrane spans lie at Phe-34 to Met-54, Trp-78 to Ile-99, Trp-114 to Leu-134, and Phe-179 to Met-199. 2 residues coordinate heme b: His-84 and His-98. The heme b site is built by His-183 and His-197. His-202 is an a ubiquinone binding site. A run of 4 helical transmembrane segments spans residues Leu-227–Ser-247, Leu-289–His-309, Leu-321–Ser-341, and Phe-348–Pro-368.

Belongs to the cytochrome b family. In terms of assembly, the cytochrome bc1 complex contains 11 subunits: 3 respiratory subunits (MT-CYB, CYC1 and UQCRFS1), 2 core proteins (UQCRC1 and UQCRC2) and 6 low-molecular weight proteins (UQCRH/QCR6, UQCRB/QCR7, UQCRQ/QCR8, UQCR10/QCR9, UQCR11/QCR10 and a cleavage product of UQCRFS1). This cytochrome bc1 complex then forms a dimer. Heme b is required as a cofactor.

The protein localises to the mitochondrion inner membrane. Functionally, component of the ubiquinol-cytochrome c reductase complex (complex III or cytochrome b-c1 complex) that is part of the mitochondrial respiratory chain. The b-c1 complex mediates electron transfer from ubiquinol to cytochrome c. Contributes to the generation of a proton gradient across the mitochondrial membrane that is then used for ATP synthesis. In Tragopan satyra (Satyr tragopan), this protein is Cytochrome b (MT-CYB).